Here is a 481-residue protein sequence, read N- to C-terminus: Beta-1,3-glucan-binding protein (481 aa).

The first 18 residues, 1-18 (RCARVCAVLFLFIQISYG), serve as a signal peptide directing secretion. Residues 20-120 (YQVPQVTVQA…LSFTVSALED (101 aa)) enclose the CBM39 domain. Residue N110 is glycosylated (N-linked (GlcNAc...) asparagine). The GH16 domain occupies 124 to 481 (TGTGTDPVPT…LVDYVKVVAL (358 aa)).

This sequence belongs to the insect beta-1,3-glucan binding protein family.

Its subcellular location is the secreted. Functionally, involved in the recognition of invading microorganisms. Binds specifically to beta-1,3-glucan and activates the phenoloxidase cascade. The polypeptide is Beta-1,3-glucan-binding protein (Hyphantria cunea (Fall webworm moth)).